The following is a 371-amino-acid chain: 3-dehydroquinate synthase (371 aa).

Residues 72 to 77 (DGEEHK), 106 to 110 (GVVGD), 130 to 131 (TT), K143, K152, and 170 to 173 (TLKT) each bind NAD(+). Residues E185, H248, and H265 each coordinate Zn(2+).

It belongs to the sugar phosphate cyclases superfamily. Dehydroquinate synthase family. Requires Co(2+) as cofactor. The cofactor is Zn(2+). NAD(+) serves as cofactor.

The protein resides in the cytoplasm. It carries out the reaction 7-phospho-2-dehydro-3-deoxy-D-arabino-heptonate = 3-dehydroquinate + phosphate. It functions in the pathway metabolic intermediate biosynthesis; chorismate biosynthesis; chorismate from D-erythrose 4-phosphate and phosphoenolpyruvate: step 2/7. Functionally, catalyzes the conversion of 3-deoxy-D-arabino-heptulosonate 7-phosphate (DAHP) to dehydroquinate (DHQ). The protein is 3-dehydroquinate synthase of Pelotomaculum thermopropionicum (strain DSM 13744 / JCM 10971 / SI).